A 295-amino-acid polypeptide reads, in one-letter code: Protoheme IX farnesyltransferase (295 aa).

The Cytoplasmic portion of the chain corresponds to 1-9 (MSVKHFIQI). Residues 10-28 (TKPGIIFGNVLSVAGGFFL) traverse the membrane as a helical segment. The Periplasmic portion of the chain corresponds to 29-37 (ASKGHVDFA). Residues 38–56 (LFLAVVIGTSLVVASGCVF) form a helical membrane-spanning segment. Residues 57-78 (NNCIDRDIDHKMERTKNRVMVQ) are Cytoplasmic-facing. The helical transmembrane segment at 79 to 97 (GGMSLPLALIYATLLGVAG) threads the bilayer. At 98–107 (FSLLYVQANP) the chain is on the periplasmic side. The chain crosses the membrane as a helical span at residues 108 to 126 (LSAFCALIGFIVYVGFYSL). The Cytoplasmic segment spans residues 127–197 (WLKRKSVHGT…YSAANIPVLP (71 aa)). Residues 198-216 (VARGILAAKKQIVLYVLAF) form a helical membrane-spanning segment. Topologically, residues 217–228 (VLATLMLTLGGY) are periplasmic. The chain crosses the membrane as a helical span at residues 229–247 (AGLGYLAVAAAMGLYWLYM). Topologically, residues 248–268 (AWGGYKAEDDSKWARKVFGFS) are cytoplasmic. The helical transmembrane segment at 269–287 (ILTVTALSVMMGVDSQTAA) threads the bilayer. Topologically, residues 288–295 (DVLMTYAR) are periplasmic.

Belongs to the UbiA prenyltransferase family. Mg(2+) is required as a cofactor. It depends on Ca(2+) as a cofactor.

It localises to the cell inner membrane. The enzyme catalyses heme b + (2E,6E)-farnesyl diphosphate + H2O = Fe(II)-heme o + diphosphate. Converts protoheme IX and farnesyl diphosphate to heme O. The protein is Protoheme IX farnesyltransferase (cyoE) of Pseudomonas putida (Arthrobacter siderocapsulatus).